Consider the following 243-residue polypeptide: Adenosylcobinamide-GDP ribazoletransferase (243 aa).

5 consecutive transmembrane segments (helical) span residues 31 to 51 (LLFY…FSAL), 57 to 77 (LMLH…GLHL), 109 to 129 (IAVV…LALI), 135 to 155 (IGLL…FLGT), and 188 to 208 (VLLA…CFFW).

This sequence belongs to the CobS family. The cofactor is Mg(2+).

It is found in the cell inner membrane. It carries out the reaction alpha-ribazole + adenosylcob(III)inamide-GDP = adenosylcob(III)alamin + GMP + H(+). It catalyses the reaction alpha-ribazole 5'-phosphate + adenosylcob(III)inamide-GDP = adenosylcob(III)alamin 5'-phosphate + GMP + H(+). The protein operates within cofactor biosynthesis; adenosylcobalamin biosynthesis; adenosylcobalamin from cob(II)yrinate a,c-diamide: step 7/7. Functionally, joins adenosylcobinamide-GDP and alpha-ribazole to generate adenosylcobalamin (Ado-cobalamin). Also synthesizes adenosylcobalamin 5'-phosphate from adenosylcobinamide-GDP and alpha-ribazole 5'-phosphate. This is Adenosylcobinamide-GDP ribazoletransferase from Pseudomonas savastanoi pv. phaseolicola (strain 1448A / Race 6) (Pseudomonas syringae pv. phaseolicola (strain 1448A / Race 6)).